The following is a 542-amino-acid chain: Chaperonin GroEL (542 aa).

ATP-binding positions include 29–32 (TLGP), 86–90 (DGTTT), Gly413, 476–478 (NAA), and Asp492.

The protein belongs to the chaperonin (HSP60) family. As to quaternary structure, forms a cylinder of 14 subunits composed of two heptameric rings stacked back-to-back. Interacts with the co-chaperonin GroES.

The protein localises to the cytoplasm. It catalyses the reaction ATP + H2O + a folded polypeptide = ADP + phosphate + an unfolded polypeptide.. Its function is as follows. Together with its co-chaperonin GroES, plays an essential role in assisting protein folding. The GroEL-GroES system forms a nano-cage that allows encapsulation of the non-native substrate proteins and provides a physical environment optimized to promote and accelerate protein folding. The sequence is that of Chaperonin GroEL from Listeria welshimeri serovar 6b (strain ATCC 35897 / DSM 20650 / CCUG 15529 / CIP 8149 / NCTC 11857 / SLCC 5334 / V8).